We begin with the raw amino-acid sequence, 740 residues long: E3 ubiquitin-protein ligase DTX3L (740 aa).

Residue A2 is modified to N-acetylalanine. Phosphoserine is present on S9. Disordered regions lie at residues 96–119 (NTRP…MHQH), 195–231 (SEQK…KAEQ), and 524–551 (HETP…SEAS). 2 stretches are compositionally biased toward polar residues: residues 98-111 (RPQI…QAET) and 195-205 (SEQKQQFSPSM). S202 carries the phosphoserine modification. Basic and acidic residues predominate over residues 206-218 (TERKPLSQQERDS). S221, S532, and S539 each carry phosphoserine. An RING-type zinc finger spans residues 561 to 600 (CVICMDTISNKKVLPKCKHEFCAPCINKAMSYKPICPTCQ).

Belongs to the Deltex family. Homodimer and heterodimer. Can heterodimerize with DTX1, enhancing its ubiquitin ligase activity in vitro. Interacts (via N-terminus) with ADP ribosyltransferase PARP9/BAL1 (via PARP catalytic domain) forming a stable complex; the interaction is required to activate PARP9 but is dispensable for DTX3L catalytic activity. Forms a complex with STAT1 and PARP9 independently of IFNB1 or IFNG-mediated STAT1 'Tyr-701' phosphorylation. Found in a complex with PARP9, STAT1 and H2BC9. Found in a complex with E3 ligase ITCH and ESCRT-0 components HGS and STAM. Interacts (via C-terminus) with ITCH; the interaction is increased upon CXCL12 stimulation and inhibits ITCH catalytic activity; the interaction is direct. Interacts with HGS and STAM; the interaction brings together HGS and STAM and promotes their recruitment to early endosomes. As to quaternary structure, (Microbial infection) Interacts with encephalomyocarditis virus (EMCV) C3 protease; the interaction results in C3 protease 'Lys-48'-linked ubiquitination. In terms of assembly, (Microbial infection) Interacts with human rhinovirus (HRV) C3 protease; the interaction results in C3 protease 'Lys-48'-linked ubiquitination. Post-translationally, autoubiquitinated.

The protein resides in the cytoplasm. The protein localises to the nucleus. It localises to the early endosome membrane. It is found in the lysosome membrane. The enzyme catalyses S-ubiquitinyl-[E2 ubiquitin-conjugating enzyme]-L-cysteine + [acceptor protein]-L-lysine = [E2 ubiquitin-conjugating enzyme]-L-cysteine + N(6)-ubiquitinyl-[acceptor protein]-L-lysine.. Its pathway is protein modification; protein ubiquitination. Its activity is regulated as follows. Binding to PARP9 enhances DTX3L catalytic activity. In terms of biological role, E3 ubiquitin-protein ligase which, in association with ADP-ribosyltransferase PARP9, plays a role in DNA damage repair and in interferon-mediated antiviral responses. Monoubiquitinates several histones, including histone H2A, H2B, H3 and H4. In response to DNA damage, mediates monoubiquitination of 'Lys-91' of histone H4 (H4K91ub1). The exact role of H4K91ub1 in DNA damage response is still unclear but it may function as a licensing signal for additional histone H4 post-translational modifications such as H4 'Lys-20' methylation (H4K20me). PARP1-dependent PARP9-DTX3L-mediated ubiquitination promotes the rapid and specific recruitment of 53BP1/TP53BP1, UIMC1/RAP80, and BRCA1 to DNA damage sites. By monoubiquitinating histone H2B H2BC9/H2BJ and thereby promoting chromatin remodeling, positively regulates STAT1-dependent interferon-stimulated gene transcription and thus STAT1-mediated control of viral replication. Independently of its catalytic activity, promotes the sorting of chemokine receptor CXCR4 from early endosome to lysosome following CXCL12 stimulation by reducing E3 ligase ITCH activity and thus ITCH-mediated ubiquitination of endosomal sorting complex required for transport ESCRT-0 components HGS and STAM. In addition, required for the recruitment of HGS and STAM to early endosomes. In association with PARP9, plays a role in antiviral responses by mediating 'Lys-48'-linked ubiquitination of encephalomyocarditis virus (EMCV) and human rhinovirus (HRV) C3 proteases and thus promoting their proteasomal-mediated degradation. The chain is E3 ubiquitin-protein ligase DTX3L (DTX3L) from Homo sapiens (Human).